We begin with the raw amino-acid sequence, 192 residues long: Xanthine phosphoribosyltransferase (192 aa).

Positions 20 and 27 each coordinate xanthine. Residue 128 to 132 (ANGQA) coordinates 5-phospho-alpha-D-ribose 1-diphosphate. Residue Lys-156 participates in xanthine binding.

It belongs to the purine/pyrimidine phosphoribosyltransferase family. Xpt subfamily. In terms of assembly, homodimer.

It localises to the cytoplasm. It catalyses the reaction XMP + diphosphate = xanthine + 5-phospho-alpha-D-ribose 1-diphosphate. It functions in the pathway purine metabolism; XMP biosynthesis via salvage pathway; XMP from xanthine: step 1/1. In terms of biological role, converts the preformed base xanthine, a product of nucleic acid breakdown, to xanthosine 5'-monophosphate (XMP), so it can be reused for RNA or DNA synthesis. This chain is Xanthine phosphoribosyltransferase, found in Lacticaseibacillus casei (strain BL23) (Lactobacillus casei).